A 594-amino-acid polypeptide reads, in one-letter code: Homeobox protein prospero homolog 1 (594 aa).

Polar residues-rich tracts occupy residues Met-1 to Gln-13 and Pro-36 to Arg-50. Disordered regions lie at residues Met-1–Ser-20, Ile-30–Gln-180, and Asp-358–Ala-389. Positions Ser-73–Lys-101 are enriched in low complexity. The span at Glu-105 to Ile-117 shows a compositional bias: polar residues. A compositionally biased stretch (basic and acidic residues) spans Glu-118–Met-135. The span at Glu-136–Glu-162 shows a compositional bias: acidic residues. The segment covering Lys-369–Met-378 has biased composition (basic and acidic residues). The segment covering Ser-379–Ala-389 has biased composition (low complexity). One can recognise a Prospero-type homeo domain in the interval Ser-435 to Met-493. Positions Ser-435 to Glu-593 are homeo-Prospero. The region spanning Glu-494 to Glu-593 is the Prospero domain.

It belongs to the Prospero homeodomain family.

It is found in the nucleus. In terms of biological role, transcription factor involved in developmental processes. Controls the transcription of genes required for excretory canal formation. The chain is Homeobox protein prospero homolog 1 from Caenorhabditis elegans.